The chain runs to 278 residues: NADPH-dependent 7-cyano-7-deazaguanine reductase (278 aa).

87-89 is a binding site for substrate; the sequence is IES. 89–90 provides a ligand contact to NADPH; sequence SK. The active-site Thioimide intermediate is the Cys185. The active-site Proton donor is the Asp192. 224-225 contributes to the substrate binding site; the sequence is HE. 253–254 contributes to the NADPH binding site; sequence RG. Positions 255–278 are disordered; it reads GLDINPYRSTNPTFSVQNHRSFRQ. Over residues 261-278 the composition is skewed to polar residues; it reads YRSTNPTFSVQNHRSFRQ.

Belongs to the GTP cyclohydrolase I family. QueF type 2 subfamily. Homodimer.

Its subcellular location is the cytoplasm. It carries out the reaction 7-aminomethyl-7-carbaguanine + 2 NADP(+) = 7-cyano-7-deazaguanine + 2 NADPH + 3 H(+). It functions in the pathway tRNA modification; tRNA-queuosine biosynthesis. Catalyzes the NADPH-dependent reduction of 7-cyano-7-deazaguanine (preQ0) to 7-aminomethyl-7-deazaguanine (preQ1). The protein is NADPH-dependent 7-cyano-7-deazaguanine reductase of Coxiella burnetii (strain Dugway 5J108-111).